The sequence spans 233 residues: Phosducin-like protein C2A9.09 (233 aa).

Residues 58–212 (EDEEDDEFLQ…DIAALKDPQN (155 aa)) form the Phosducin domain. A thioredoxin fold region spans residues 86–233 (FGSVYPISKP…VNDDLDDDFD (148 aa)). Positions 207-233 (LKDPQNAEDELGKRDSSVNDDLDDDFD) are disordered. Phosphoserine occurs at positions 222 and 223. Residues 224–233 (VNDDLDDDFD) show a composition bias toward acidic residues.

Belongs to the phosducin family.

The chain is Phosducin-like protein C2A9.09 from Schizosaccharomyces pombe (strain 972 / ATCC 24843) (Fission yeast).